Here is a 118-residue protein sequence, read N- to C-terminus: MASQSQGIQQLLQAEKRAAEKVADARKRKARRLKQAKEEAQMEVEQYRREREQEFQSKQQAAMGSQGNLSAEVEQATRRQVQGMQSSQQRNRERVLAQLLGMVCDVRPQVHPNYRIAA.

The interval 26–90 (RKRKARRLKQ…VQGMQSSQQR (65 aa)) is disordered. A compositionally biased stretch (basic and acidic residues) spans 35–55 (QAKEEAQMEVEQYRREREQEF). Polar residues-rich tracts occupy residues 56 to 69 (QSKQQAAMGSQGNL) and 78 to 89 (RRQVQGMQSSQQ).

It belongs to the V-ATPase G subunit family. In terms of assembly, V-ATPase is a heteromultimeric enzyme made up of two complexes: the ATP-hydrolytic V1 complex and the proton translocation V0 complex. The V1 complex consists of three catalytic AB heterodimers that form a heterohexamer, three peripheral stalks each consisting of EG heterodimers, one central rotor including subunits D and F, and the regulatory subunits C and H. The proton translocation complex V0 consists of the proton transport subunit a, a ring of proteolipid subunits c9c'', rotary subunit d, subunits e and f, and the accessory subunits ATP6AP1/Ac45 and ATP6AP2/PRR.

It localises to the melanosome. Its subcellular location is the cytoplasmic vesicle. The protein resides in the clathrin-coated vesicle membrane. Functionally, subunit of the V1 complex of vacuolar(H+)-ATPase (V-ATPase), a multisubunit enzyme composed of a peripheral complex (V1) that hydrolyzes ATP and a membrane integral complex (V0) that translocates protons. V-ATPase is responsible for acidifying and maintaining the pH of intracellular compartments and in some cell types, is targeted to the plasma membrane, where it is responsible for acidifying the extracellular environment. The polypeptide is V-type proton ATPase subunit G 2 (ATP6V1G2) (Sus scrofa (Pig)).